Reading from the N-terminus, the 952-residue chain is Glycine dehydrogenase (decarboxylating) (952 aa).

Residue Lys-703 is modified to N6-(pyridoxal phosphate)lysine.

It belongs to the GcvP family. The glycine cleavage system is composed of four proteins: P, T, L and H. It depends on pyridoxal 5'-phosphate as a cofactor.

It catalyses the reaction N(6)-[(R)-lipoyl]-L-lysyl-[glycine-cleavage complex H protein] + glycine + H(+) = N(6)-[(R)-S(8)-aminomethyldihydrolipoyl]-L-lysyl-[glycine-cleavage complex H protein] + CO2. Its function is as follows. The glycine cleavage system catalyzes the degradation of glycine. The P protein binds the alpha-amino group of glycine through its pyridoxal phosphate cofactor; CO(2) is released and the remaining methylamine moiety is then transferred to the lipoamide cofactor of the H protein. The protein is Glycine dehydrogenase (decarboxylating) of Mycobacterium leprae (strain Br4923).